A 444-amino-acid chain; its full sequence is tRNA-2-methylthio-N(6)-dimethylallyladenosine synthase (444 aa).

Residues 2-119 (KKLYIRTFGC…LPSMLNEVLT (118 aa)) enclose the MTTase N-terminal domain. The [4Fe-4S] cluster site is built by cysteine 11, cysteine 48, cysteine 82, cysteine 161, cysteine 165, and cysteine 168. In terms of domain architecture, Radical SAM core spans 147–379 (KTSSVTAFVS…QKTIDKNTER (233 aa)). The TRAM domain occupies 382-444 (KSMVGSVQKI…GNSLVGNLIA (63 aa)).

Belongs to the methylthiotransferase family. MiaB subfamily. As to quaternary structure, monomer. The cofactor is [4Fe-4S] cluster.

Its subcellular location is the cytoplasm. It catalyses the reaction N(6)-dimethylallyladenosine(37) in tRNA + (sulfur carrier)-SH + AH2 + 2 S-adenosyl-L-methionine = 2-methylsulfanyl-N(6)-dimethylallyladenosine(37) in tRNA + (sulfur carrier)-H + 5'-deoxyadenosine + L-methionine + A + S-adenosyl-L-homocysteine + 2 H(+). In terms of biological role, catalyzes the methylthiolation of N6-(dimethylallyl)adenosine (i(6)A), leading to the formation of 2-methylthio-N6-(dimethylallyl)adenosine (ms(2)i(6)A) at position 37 in tRNAs that read codons beginning with uridine. The protein is tRNA-2-methylthio-N(6)-dimethylallyladenosine synthase of Ruthia magnifica subsp. Calyptogena magnifica.